Here is a 441-residue protein sequence, read N- to C-terminus: RNA-binding protein BRN1 (441 aa).

RRM domains follow at residues 18–99 and 106–186; these read VKLF…YADG and HKLF…WADT. Residues 258–273 show a composition bias toward polar residues; that stretch reads QPNQGNNNALQGTSPD. The disordered stretch occupies residues 258–282; the sequence is QPNQGNNNALQGTSPDSVPPRLARR. An RRM 3 domain is found at 349 to 427; it reads ANLFIYNIPR…KKLKVQLKRD (79 aa).

In terms of tissue distribution, highly expressed in stems and cauline leaves, and at lower levels in siliques, flowers, roots and rosette leaves.

It is found in the cytoplasm. Functionally, RNA-binding protein involved in the regulation of flowering time. Acts as a repressor of the activity of SOC1, a transcriptional activator of flowering time. Binds to the 3'-UTR of SOC1 mRNA in the cytoplasm and participates in SOC1 mRNA decay, mediated by the distal region of the SOC1 3'-UTR. Acts as a positive regulator of salicylic acid (SA)-mediated immunity. May act on SA signaling-related genes at a post-transcriptional level. This Arabidopsis thaliana (Mouse-ear cress) protein is RNA-binding protein BRN1.